The primary structure comprises 545 residues: Chaperonin GroEL (545 aa).

Residues 29-32 (TMGP), lysine 50, 86-90 (DGTTT), glycine 414, 480-482 (NAA), and aspartate 496 contribute to the ATP site.

It belongs to the chaperonin (HSP60) family. In terms of assembly, forms a cylinder of 14 subunits composed of two heptameric rings stacked back-to-back. Interacts with the co-chaperonin GroES.

It localises to the cytoplasm. The catalysed reaction is ATP + H2O + a folded polypeptide = ADP + phosphate + an unfolded polypeptide.. Functionally, together with its co-chaperonin GroES, plays an essential role in assisting protein folding. The GroEL-GroES system forms a nano-cage that allows encapsulation of the non-native substrate proteins and provides a physical environment optimized to promote and accelerate protein folding. In Malacoplasma penetrans (strain HF-2) (Mycoplasma penetrans), this protein is Chaperonin GroEL.